The following is a 265-amino-acid chain: Sulfur carrier protein FdhD (265 aa).

Catalysis depends on Cys107, which acts as the Cysteine persulfide intermediate.

This sequence belongs to the FdhD family.

It localises to the cytoplasm. Functionally, required for formate dehydrogenase (FDH) activity. Acts as a sulfur carrier protein that transfers sulfur from IscS to the molybdenum cofactor prior to its insertion into FDH. The polypeptide is Sulfur carrier protein FdhD (Staphylococcus aureus (strain JH9)).